The primary structure comprises 382 residues: Protein arginine N-methyltransferase PRMT10 (382 aa).

Residues Met-1 to Gly-21 form a disordered region. Low complexity predominate over residues Gly-7–Ala-17. The region spanning Glu-28–Glu-359 is the SAM-dependent MTase PRMT-type domain. Active-site residues include Glu-142 and Glu-151. The dimerization arm stretch occupies residues Glu-189 to Glu-229.

Belongs to the class I-like SAM-binding methyltransferase superfamily. Protein arginine N-methyltransferase family. In terms of assembly, ring-like homodimer.

The enzyme catalyses L-arginyl-[protein] + 2 S-adenosyl-L-methionine = N(omega),N(omega)-dimethyl-L-arginyl-[protein] + 2 S-adenosyl-L-homocysteine + 2 H(+). Methylates (mono and asymmetric dimethylation) the guanidino nitrogens of arginyl residues in some proteins. This chain is Protein arginine N-methyltransferase PRMT10 (PRMT10), found in Oryza sativa subsp. indica (Rice).